Consider the following 662-residue polypeptide: UvrABC system protein B (662 aa).

In terms of domain architecture, Helicase ATP-binding spans 25–182 (KGIEKREKFQ…KKLVEIQYER (158 aa)). 38–45 (GVTGSGKT) provides a ligand contact to ATP. The Beta-hairpin signature appears at 91-114 (YYDYYQPEAYVAQSDTYIEKDASI). The region spanning 429 to 595 (QIDDLYTSIQ…TIIKDIREVI (167 aa)) is the Helicase C-terminal domain. The 36-residue stretch at 622 to 657 (DKLIEKYEEEMKEAAQNLQFEKAAHLRDVIYKLKKD) folds into the UVR domain.

This sequence belongs to the UvrB family. Forms a heterotetramer with UvrA during the search for lesions. Interacts with UvrC in an incision complex.

The protein localises to the cytoplasm. The UvrABC repair system catalyzes the recognition and processing of DNA lesions. A damage recognition complex composed of 2 UvrA and 2 UvrB subunits scans DNA for abnormalities. Upon binding of the UvrA(2)B(2) complex to a putative damaged site, the DNA wraps around one UvrB monomer. DNA wrap is dependent on ATP binding by UvrB and probably causes local melting of the DNA helix, facilitating insertion of UvrB beta-hairpin between the DNA strands. Then UvrB probes one DNA strand for the presence of a lesion. If a lesion is found the UvrA subunits dissociate and the UvrB-DNA preincision complex is formed. This complex is subsequently bound by UvrC and the second UvrB is released. If no lesion is found, the DNA wraps around the other UvrB subunit that will check the other stand for damage. The chain is UvrABC system protein B from Clostridium botulinum (strain Langeland / NCTC 10281 / Type F).